The chain runs to 91 residues: Bombyxin C-1 (91 aa).

Positions methionine 1–alanine 19 are cleaved as a signal peptide. The residue at position 20 (glutamine 20) is a Pyrrolidone carboxylic acid. Disulfide bonds link cysteine 27/cysteine 76, cysteine 39/cysteine 89, and cysteine 75/cysteine 80. The propeptide at serine 47–glycine 67 is c peptide like.

The protein belongs to the insulin family. Heterodimer of a B chain and an A chain linked by two disulfide bonds.

The protein resides in the secreted. Functionally, brain peptide responsible for activation of prothoracic glands to produce ecdysone in insects. This is Bombyxin C-1 (BBXC1) from Bombyx mori (Silk moth).